The sequence spans 393 residues: Branched-chain-amino-acid aminotransferase, mitochondrial (393 aa).

The N-terminal 27 residues, Met1 to Cys27, are a transit peptide targeting the mitochondrion. Position 169 (Tyr169) interacts with substrate. Position 230 is an N6-(pyridoxal phosphate)lysine (Lys230). Lys322 carries the N6-acetyllysine modification.

Belongs to the class-IV pyridoxal-phosphate-dependent aminotransferase family. Homodimer. Pyridoxal 5'-phosphate serves as cofactor. Expressed in all tissues.

The protein localises to the mitochondrion. It carries out the reaction L-leucine + 2-oxoglutarate = 4-methyl-2-oxopentanoate + L-glutamate. The catalysed reaction is L-isoleucine + 2-oxoglutarate = (S)-3-methyl-2-oxopentanoate + L-glutamate. The enzyme catalyses L-valine + 2-oxoglutarate = 3-methyl-2-oxobutanoate + L-glutamate. Catalyzes the first reaction in the catabolism of the essential branched chain amino acids leucine, isoleucine, and valine. May also function as a transporter of branched chain alpha-keto acids. The sequence is that of Branched-chain-amino-acid aminotransferase, mitochondrial (Bcat2) from Rattus norvegicus (Rat).